Consider the following 175-residue polypeptide: Shikimate kinase (175 aa).

Position 12–17 (12–17 (GAGKTT)) interacts with ATP. Threonine 16 lines the Mg(2+) pocket. Substrate-binding residues include aspartate 34, arginine 58, and glycine 80. Position 117 (arginine 117) interacts with ATP. Substrate is bound at residue arginine 136.

Belongs to the shikimate kinase family. Monomer. Requires Mg(2+) as cofactor.

Its subcellular location is the cytoplasm. It catalyses the reaction shikimate + ATP = 3-phosphoshikimate + ADP + H(+). It functions in the pathway metabolic intermediate biosynthesis; chorismate biosynthesis; chorismate from D-erythrose 4-phosphate and phosphoenolpyruvate: step 5/7. Its function is as follows. Catalyzes the specific phosphorylation of the 3-hydroxyl group of shikimic acid using ATP as a cosubstrate. The sequence is that of Shikimate kinase from Saccharopolyspora erythraea (strain ATCC 11635 / DSM 40517 / JCM 4748 / NBRC 13426 / NCIMB 8594 / NRRL 2338).